Reading from the N-terminus, the 387-residue chain is Eukaryotic translation initiation factor 3 subunit M (387 aa).

Residues 181 to 340 (LSSKVMIELL…QKVHISSTMH (160 aa)) form the PCI domain.

It belongs to the eIF-3 subunit M family. Component of the eukaryotic translation initiation factor 3 (eIF-3) complex. The eIF-3 complex interacts with pix.

It localises to the cytoplasm. It is found in the golgi apparatus. Its function is as follows. Component of the eukaryotic translation initiation factor 3 (eIF-3) complex, which is involved in protein synthesis of a specialized repertoire of mRNAs and, together with other initiation factors, stimulates binding of mRNA and methionyl-tRNAi to the 40S ribosome. The eIF-3 complex specifically targets and initiates translation of a subset of mRNAs involved in cell proliferation. This chain is Eukaryotic translation initiation factor 3 subunit M, found in Drosophila sechellia (Fruit fly).